Here is a 149-residue protein sequence, read N- to C-terminus: Large ribosomal subunit protein uL13 (149 aa).

This sequence belongs to the universal ribosomal protein uL13 family. In terms of assembly, part of the 50S ribosomal subunit.

In terms of biological role, this protein is one of the early assembly proteins of the 50S ribosomal subunit, although it is not seen to bind rRNA by itself. It is important during the early stages of 50S assembly. The protein is Large ribosomal subunit protein uL13 of Chlorobium luteolum (strain DSM 273 / BCRC 81028 / 2530) (Pelodictyon luteolum).